Reading from the N-terminus, the 182-residue chain is UPF0215 protein Pcal_0119 (182 aa).

The protein belongs to the UPF0215 family.

This Pyrobaculum calidifontis (strain DSM 21063 / JCM 11548 / VA1) protein is UPF0215 protein Pcal_0119.